The primary structure comprises 352 residues: Methylthioribose-1-phosphate isomerase (352 aa).

Residues 55–57, R98, and Q201 each bind substrate; that span reads RGA. Catalysis depends on D242, which acts as the Proton donor. 252–253 contributes to the substrate binding site; sequence NK.

The protein belongs to the eIF-2B alpha/beta/delta subunits family. MtnA subfamily.

The enzyme catalyses 5-(methylsulfanyl)-alpha-D-ribose 1-phosphate = 5-(methylsulfanyl)-D-ribulose 1-phosphate. The protein operates within amino-acid biosynthesis; L-methionine biosynthesis via salvage pathway; L-methionine from S-methyl-5-thio-alpha-D-ribose 1-phosphate: step 1/6. Functionally, catalyzes the interconversion of methylthioribose-1-phosphate (MTR-1-P) into methylthioribulose-1-phosphate (MTRu-1-P). This is Methylthioribose-1-phosphate isomerase from Methylococcus capsulatus (strain ATCC 33009 / NCIMB 11132 / Bath).